Here is a 391-residue protein sequence, read N- to C-terminus: Homocysteine-responsive endoplasmic reticulum-resident ubiquitin-like domain member 1 protein (391 aa).

Met-1 is subject to N-acetylmethionine. At 1-263 the chain is on the cytoplasmic side; sequence MESETEPEPV…VEEDDEINRD (263 aa). The region spanning 10 to 72 is the Ubiquitin-like domain; the sequence is VTLLVKSPNQ…LLDHQCLRDL (63 aa). Residues 100 to 126 form a disordered region; that stretch reads KVAESTEEPAGSNRGQYPEDSSSDGLR. A compositionally biased stretch (polar residues) spans 112–124; sequence NRGQYPEDSSSDG. The interval 115–200 is interaction with UBQLN1; sequence QYPEDSSSDG…ASGAFVPPPS (86 aa). Ser-135 carries the phosphoserine modification. The interaction with SYVN1 stretch occupies residues 170–190; the sequence is LSWFQQIYARQYYMQYLAATA. The chain crosses the membrane as a helical span at residues 264–284; it reads WLDWTYSAATFSVFLSILYFY. At 285-289 the chain is on the lumenal side; it reads SSLSR. Residues 290 to 310 form a helical membrane-spanning segment; the sequence is FLMVMGATVVMYLHHVGWFPF. Over 311–391 the chain is Cytoplasmic; it reads RPRPVQNFPN…LPEGPPAIAN (81 aa). Positions 318-359 are disordered; that stretch reads FPNDGPPPDVVNQDPNNNLQEGTDPETEDPNHLPPDRDVLDG. The segment covering 346 to 357 has biased composition (basic and acidic residues); sequence DPNHLPPDRDVL.

In terms of assembly, interacts with PSEN1 and PSEN2. Interacts with UBXN6. Interacts with UBQLN1, UBQLN2 and UBQLN4. Component of the HRD1 complex, which comprises at least SYNV1/HRD1, FAM8A1, HERPUD1/HERP, OS9, SEL1L and UBE2J1. FAM8A1 binding to SYNV1 may promote recruitment of HERPUD1 to the HRD1 complex. As to expression, widely expressed; in the brain, expression seems to be restricted to neurons and vascular smooth muscle cells. Present in activated microglia in senile plaques in the brain of patients with Alzheimer disease.

It is found in the endoplasmic reticulum membrane. Component of the endoplasmic reticulum quality control (ERQC) system also called ER-associated degradation (ERAD) involved in ubiquitin-dependent degradation of misfolded endoplasmic reticulum proteins. Could enhance presenilin-mediated amyloid-beta protein 40 generation. Binds to ubiquilins and this interaction is required for efficient degradation of CD3D via the ERAD pathway. This chain is Homocysteine-responsive endoplasmic reticulum-resident ubiquitin-like domain member 1 protein (HERPUD1), found in Homo sapiens (Human).